A 676-amino-acid chain; its full sequence is Double-stranded RNA-specific editase Adar (676 aa).

The disordered stretch occupies residues 1 to 51 (MKFDSRVMLNSANNNSPQHPVSAPSDINMNGYNRKLPQKRGYEMPKYSDPK). Positions 8-31 (MLNSANNNSPQHPVSAPSDINMNG) are enriched in polar residues. Positions 40–51 (RGYEMPKYSDPK) are enriched in basic and acidic residues. DRBM domains are found at residues 61–127 (QPKN…SFIQ) and 197–272 (ITVD…SLCN). The 325-residue stretch at 348-672 (SVSTGTKCVS…LKKPIEQDEF (325 aa)) folds into the A to I editase domain. Zn(2+) is bound at residue His372. The Proton donor role is filled by Glu374. The Zn(2+) site is built by Cys430 and Cys493.

In terms of tissue distribution, expressed in embryonic nervous system; late stage 13 sees ventral nerve cord expression which spreads to brain by stage 16. Expression is maintained through to adulthood.

Its function is as follows. Has A-to-I RNA editing activity on extended dsRNA: edits RNA-binding protein Rnp4F. A-to-I editing of pre-mRNAs acts predominantly through nervous system targets to affect adult nervous system integrity, function and behavior. Essential for adaptation to environmental stresses, such as oxygen deprivation, and for the prevention of premature neuronal degeneration, through the editing of ion channels as targets. The polypeptide is Double-stranded RNA-specific editase Adar (Drosophila melanogaster (Fruit fly)).